Reading from the N-terminus, the 829-residue chain is DNA ligase (829 aa).

The segment at 1–23 is disordered; the sequence is MPAQTSRARPVEEMTAAQAREAH. NAD(+) is bound by residues 47–51, 96–97, and Glu130; these read DAEYD and SL. Lys132 acts as the N6-AMP-lysine intermediate in catalysis. NAD(+)-binding residues include Arg153, Glu190, Lys306, and Lys330. 4 residues coordinate Zn(2+): Cys453, Cys456, Cys477, and Cys483. The 80-residue stretch at 750-829 folds into the BRCT domain; it reads AAAAVFSGQT…AEWLAMVEAA (80 aa).

This sequence belongs to the NAD-dependent DNA ligase family. LigA subfamily. Mg(2+) serves as cofactor. The cofactor is Mn(2+).

It catalyses the reaction NAD(+) + (deoxyribonucleotide)n-3'-hydroxyl + 5'-phospho-(deoxyribonucleotide)m = (deoxyribonucleotide)n+m + AMP + beta-nicotinamide D-nucleotide.. Its function is as follows. DNA ligase that catalyzes the formation of phosphodiester linkages between 5'-phosphoryl and 3'-hydroxyl groups in double-stranded DNA using NAD as a coenzyme and as the energy source for the reaction. It is essential for DNA replication and repair of damaged DNA. This is DNA ligase from Methylobacterium nodulans (strain LMG 21967 / CNCM I-2342 / ORS 2060).